A 318-amino-acid chain; its full sequence is NAD(P)H-dependent D-xylose reductase (318 aa).

Residue Tyr-48 is the Proton donor of the active site. His-110 is a binding site for substrate. NAD(+) is bound by residues 165 to 166, 214 to 223, and 270 to 280; these read SN, SNFGPLSFLE, and KSTFPNTLAVN.

Belongs to the aldo/keto reductase family.

The catalysed reaction is xylitol + NAD(+) = D-xylose + NADH + H(+). The enzyme catalyses xylitol + NADP(+) = D-xylose + NADPH + H(+). Its pathway is carbohydrate metabolism; D-xylose degradation. Reduces D-xylose into xylitol. Has a preference for NADPH, but can also utilize NADH as cosubstrate. The protein is NAD(P)H-dependent D-xylose reductase (XYL1) of Pachysolen tannophilus (Yeast).